A 381-amino-acid chain; its full sequence is E3 ubiquitin-protein ligase KCMF1 (381 aa).

The residue at position 2 (serine 2) is an N-acetylserine. Serine 2 bears the Phosphoserine mark. The segment at 4-60 adopts a ZZ-type zinc-finger fold; sequence HEGVSCDACLKGNFRGRRYKCLICYDYDLCASCYESGATTTRHTTDHPMQCILTRVD. The Zn(2+) site is built by cysteine 9, cysteine 12, cysteine 24, cysteine 27, cysteine 33, cysteine 36, histidine 46, and histidine 50. Residues 78–101 form a C2H2-type zinc finger; that stretch reads FTCPYCGKMGYTETSLQEHVTSEH. The tract at residues 154 to 194 is disordered; the sequence is MFHPGRGLGGPRARRSNMHFTSSSTGGLSSSQSSYSPSSRE. Phosphoserine is present on residues serine 169, serine 189, and serine 212. Residues 175-192 are compositionally biased toward low complexity; the sequence is SSSTGGLSSSQSSYSPSS. The stretch at 224-259 forms a coiled coil; it reads ASQLQQLQMQLQLERQHAQAARQQLETARNASRRTN. Phosphoserine occurs at positions 335 and 336.

It belongs to the KCMF1 family. Component of the SIFI complex, composed of KCMF1, UBR4 and calmodulin (CALM1, CALM2 or CALM3). As to expression, testis, liver, kidney, heart and skeletal muscle.

It localises to the cytoplasm. The protein resides in the late endosome. Its subcellular location is the lysosome. It carries out the reaction S-ubiquitinyl-[E2 ubiquitin-conjugating enzyme]-L-cysteine + [acceptor protein]-L-lysine = [E2 ubiquitin-conjugating enzyme]-L-cysteine + N(6)-ubiquitinyl-[acceptor protein]-L-lysine.. It participates in protein modification; protein ubiquitination. Functionally, E3 ubiquitin-protein ligase which accepts ubiquitin from an E2 ubiquitin-conjugating enzyme and then transfers it to targeted substrates, promoting their degradation by the proteasome. Together with UBR4, component of the N-end rule pathway: ubiquitinates proteins bearing specific N-terminal residues that are destabilizing according to the N-end rule, leading to their degradation. Does not ubiquitinate proteins that are acetylated at the N-terminus. Together with UBR4, part of a protein quality control pathway that catalyzes ubiquitination and degradation of proteins that have been oxidized in response to reactive oxygen species (ROS): recognizes proteins with an Arg-CysO3(H) degron at the N-terminus, and mediates assembly of heterotypic 'Lys-63'-/'Lys-27'-linked branched ubiquitin chains on oxidized proteins, leading to their degradation by autophagy. Catalytic component of the SIFI complex, a multiprotein complex required to inhibit the mitochondrial stress response after a specific stress event has been resolved: ubiquitinates and degrades (1) components of the HRI-mediated signaling of the integrated stress response, such as DELE1 and EIF2AK1/HRI, as well as (2) unimported mitochondrial precursors. Within the SIFI complex, UBR4 initiates ubiquitin chain that are further elongated or branched by KCMF1. The chain is E3 ubiquitin-protein ligase KCMF1 from Mus musculus (Mouse).